A 204-amino-acid polypeptide reads, in one-letter code: Large ribosomal subunit protein bL25 (204 aa).

It belongs to the bacterial ribosomal protein bL25 family. CTC subfamily. As to quaternary structure, part of the 50S ribosomal subunit; part of the 5S rRNA/L5/L18/L25 subcomplex. Contacts the 5S rRNA. Binds to the 5S rRNA independently of L5 and L18.

Functionally, this is one of the proteins that binds to the 5S RNA in the ribosome where it forms part of the central protuberance. The chain is Large ribosomal subunit protein bL25 from Pseudomonas syringae pv. syringae (strain B728a).